Here is a 289-residue protein sequence, read N- to C-terminus: Deleted in azoospermia-like (289 aa).

The segment at 1–20 is disordered; the sequence is MSANAEAQCGSISEDNTHSS. An RRM domain is found at 36–117; that stretch reads NTVFVGGIDI…PAIRKQQNLC (82 aa). The DAZ domain occupies 162 to 187; the sequence is TYAYSSPAVLIQQQVPVGYQPAYNYQ.

This sequence belongs to the RRM DAZ family.

It localises to the cytoplasm. Its function is as follows. RNA-binding protein, which probably plays a central role in gametogenesis in both males and females. Acts by binding to the 3'-UTR of mRNA, specifically recognizing GUU triplets, and promoting the translation of key transcripts. The protein is Deleted in azoospermia-like (DAZL) of Gallus gallus (Chicken).